Reading from the N-terminus, the 135-residue chain is Large ribosomal subunit protein uL16c (135 aa).

It belongs to the universal ribosomal protein uL16 family. Part of the 50S ribosomal subunit.

It is found in the plastid. The protein localises to the chloroplast. This Daucus carota (Wild carrot) protein is Large ribosomal subunit protein uL16c.